Reading from the N-terminus, the 249-residue chain is Tetraspanin-18 (249 aa).

Over 1–13 the chain is Cytoplasmic; that stretch reads MEGDCLSCMKYLM. A helical transmembrane segment spans residues 14–34; it reads FVFNFFIFLGGACLLGIGIWV. Residues 35 to 49 are Extracellular-facing; sequence MVDPTGFREIVAANP. A helical transmembrane segment spans residues 50–70; that stretch reads LLITGAYILLAMGGLLFLLGF. Residues 71-83 are Cytoplasmic-facing; it reads LGCCGAVRENKCL. The helical transmembrane segment at 84-104 threads the bilayer; that stretch reads LLFFFLFILIIFLAELSAAIL. The Extracellular segment spans residues 105–223; the sequence is AFIFRGNLTR…AFETYVYLAG (119 aa). N-linked (GlcNAc...) asparagine glycans are attached at residues asparagine 111 and asparagine 129. Residues 224–244 form a helical membrane-spanning segment; it reads ALAIGVLAIELFAMIFAMCLF. Over 245–249 the chain is Cytoplasmic; the sequence is RGIIQ.

It belongs to the tetraspanin (TM4SF) family. As to quaternary structure, interacts with ORAI1; this interaction regulates ORAI1 exit from the endoplasmic (ER), and/or Golgi, and trafficking to the cell surface.

Its subcellular location is the membrane. Plays a role in the cell surface localization of ORAI1 and may participate in the regulation of Ca(2+) signaling and the VWF release in response to inflammatory stimuli. In Bos taurus (Bovine), this protein is Tetraspanin-18.